A 301-amino-acid chain; its full sequence is Probable alpha-L-glutamate ligase 2 (301 aa).

One can recognise an ATP-grasp domain in the interval 104–287; sequence LQLLSRKGIG…VTEPIVEYIE (184 aa). Residues lysine 141, 178–179, aspartate 187, and 211–213 contribute to the ATP site; these read EY and RSN. Residues aspartate 248, glutamate 260, and asparagine 262 each coordinate Mg(2+). Aspartate 248, glutamate 260, and asparagine 262 together coordinate Mn(2+).

The protein belongs to the RimK family. The cofactor is Mg(2+). It depends on Mn(2+) as a cofactor.

The sequence is that of Probable alpha-L-glutamate ligase 2 from Shewanella baltica (strain OS195).